Here is a 96-residue protein sequence, read N- to C-terminus: MNIRPLHDRVIVKRSEVESKSAGGIVLTGSAAEQSSRGEVLAVGNGRILENGNLMPLDVKVGDIVIFNEGYGVKKEKIDGEEVLILSESDLMAVVG.

It belongs to the GroES chaperonin family. In terms of assembly, heptamer of 7 subunits arranged in a ring. Interacts with the chaperonin GroEL.

It is found in the cytoplasm. Its function is as follows. Together with the chaperonin GroEL, plays an essential role in assisting protein folding. The GroEL-GroES system forms a nano-cage that allows encapsulation of the non-native substrate proteins and provides a physical environment optimized to promote and accelerate protein folding. GroES binds to the apical surface of the GroEL ring, thereby capping the opening of the GroEL channel. The sequence is that of Co-chaperonin GroES from Shewanella pealeana (strain ATCC 700345 / ANG-SQ1).